The chain runs to 293 residues: Oxidoreductase clz16 (293 aa).

The protein belongs to the asaB hydroxylase/desaturase family.

It participates in secondary metabolite biosynthesis. Its function is as follows. Oxidoreductase; part of the gene cluster that mediates the biosynthesis of squalestatin S1 (SQS1, also known as zaragozic acid A), a heavily oxidized fungal polyketide that offers potent cholesterol lowering activity by targeting squalene synthase (SS). SQS1 is composed of a 2,8-dioxobicyclic[3.2.1]octane-3,4,5-tricarboxyclic acid core that is connected to two lipophilic polyketide arms. These initial steps feature the priming of an unusual benzoic acid starter unit onto the highly reducing polyketide synthase clz14, followed by oxaloacetate extension and product release to generate a tricarboxylic acid containing product. The phenylalanine ammonia lyase (PAL) clz10 and the acyl-CoA ligase clz12 are involved in transforming phenylalanine into benzoyl-CoA. The citrate synthase-like protein clz17 is involved in connecting the C-alpha-carbons of the hexaketide chain and oxaloacetate to afford the tricarboxylic acid unit. The potential hydrolytic enzymes, clz11 and clz13, are in close proximity to pks2 and may participate in product release. On the other side, the tetraketide arm is synthesized by a the squalestatin tetraketide synthase clz2 and enzymatically esterified to the core in the last biosynthetic step, by the acetyltransferase clz6. The biosynthesis of the tetraketide must involve 3 rounds of chain extension. After the first and second rounds methyl-transfer occurs, and in all rounds of extension the ketoreductase and dehydratase are active. The enoyl reductase and C-MeT of clz2 are not active in the final round of extension. The acetyltransferase clz6 appears to have a broad substrate selectivity for its acyl CoA substrate, allowing the in vitro synthesis of novel squalestatins. The biosynthesis of SQS1 requires several oxidative steps likely performed by oxidoreductases clz3, clz15 and clz16. Finally, in support of the identification of the cluster as being responsible for SQS1 production, the cluster contains a gene encoding a putative squalene synthase (SS) clz20, suggesting a likely mechanism for self-resistance. The chain is Oxidoreductase clz16 from Cochliobolus lunatus (Filamentous fungus).